A 129-amino-acid polypeptide reads, in one-letter code: Follitropin subunit beta (129 aa).

An N-terminal signal peptide occupies residues methionine 1–arginine 19. Cystine bridges form between cysteine 21–cysteine 69, cysteine 35–cysteine 84, cysteine 38–cysteine 122, cysteine 46–cysteine 100, cysteine 50–cysteine 102, and cysteine 105–cysteine 112. N-linked (GlcNAc...) asparagine glycosylation is found at asparagine 25 and asparagine 42.

The protein belongs to the glycoprotein hormones subunit beta family. Heterodimer. The active follitropin is a heterodimer composed of an alpha chain/CGA shared with other hormones and a unique beta chain/FSHB shown here.

The protein resides in the secreted. Together with the alpha chain CGA constitutes follitropin, the follicle-stimulating hormone, and provides its biological specificity to the hormone heterodimer. Binds FSHR, a G protein-coupled receptor, on target cells to activate downstream signaling pathways. Follitropin is involved in follicle development and spermatogenesis in reproductive organs. This chain is Follitropin subunit beta (FSHB), found in Ovis aries (Sheep).